A 148-amino-acid polypeptide reads, in one-letter code: 3-hydroxyacyl-[acyl-carrier-protein] dehydratase FabZ (148 aa).

His-50 is a catalytic residue.

This sequence belongs to the thioester dehydratase family. FabZ subfamily.

It localises to the cytoplasm. The enzyme catalyses a (3R)-hydroxyacyl-[ACP] = a (2E)-enoyl-[ACP] + H2O. Functionally, involved in unsaturated fatty acids biosynthesis. Catalyzes the dehydration of short chain beta-hydroxyacyl-ACPs and long chain saturated and unsaturated beta-hydroxyacyl-ACPs. The sequence is that of 3-hydroxyacyl-[acyl-carrier-protein] dehydratase FabZ from Lactobacillus helveticus (strain DPC 4571).